The primary structure comprises 473 residues: ATP synthase subunit beta (473 aa).

158-165 (GGAGVGKT) is a binding site for ATP.

Belongs to the ATPase alpha/beta chains family. In terms of assembly, F-type ATPases have 2 components, CF(1) - the catalytic core - and CF(0) - the membrane proton channel. CF(1) has five subunits: alpha(3), beta(3), gamma(1), delta(1), epsilon(1). CF(0) has three main subunits: a(1), b(2) and c(9-12). The alpha and beta chains form an alternating ring which encloses part of the gamma chain. CF(1) is attached to CF(0) by a central stalk formed by the gamma and epsilon chains, while a peripheral stalk is formed by the delta and b chains.

The protein resides in the cell membrane. The catalysed reaction is ATP + H2O + 4 H(+)(in) = ADP + phosphate + 5 H(+)(out). In terms of biological role, produces ATP from ADP in the presence of a proton gradient across the membrane. The catalytic sites are hosted primarily by the beta subunits. The sequence is that of ATP synthase subunit beta from Bacillus velezensis (strain DSM 23117 / BGSC 10A6 / LMG 26770 / FZB42) (Bacillus amyloliquefaciens subsp. plantarum).